The sequence spans 244 residues: Type III pantothenate kinase (244 aa).

V12 to R19 lines the ATP pocket. Residues Y79 and G83–R86 each bind substrate. The active-site Proton acceptor is D85. Residue D105 participates in K(+) binding. ATP is bound at residue T108. T163 contributes to the substrate binding site.

The protein belongs to the type III pantothenate kinase family. As to quaternary structure, homodimer. It depends on NH4(+) as a cofactor. Requires K(+) as cofactor.

The protein resides in the cytoplasm. The catalysed reaction is (R)-pantothenate + ATP = (R)-4'-phosphopantothenate + ADP + H(+). The protein operates within cofactor biosynthesis; coenzyme A biosynthesis; CoA from (R)-pantothenate: step 1/5. Catalyzes the phosphorylation of pantothenate (Pan), the first step in CoA biosynthesis. This is Type III pantothenate kinase from Synechococcus sp. (strain JA-3-3Ab) (Cyanobacteria bacterium Yellowstone A-Prime).